The chain runs to 1015 residues: DNA polymerase catalytic subunit (1015 aa).

It belongs to the DNA polymerase type-B family. As to quaternary structure, forms a complex with the major DNA-binding protein BALF2, the DNA polymerase processivity factor BMRF1, and the alkaline exonuclease BGLF5. Interacts with the putative helicase-primase complex composed of BBLF4, BSLF1 and BBLF2/3 proteins; these interactions may coordinate leading and lagging strand DNA synthesis at the replication fork.

Its subcellular location is the host nucleus. It catalyses the reaction DNA(n) + a 2'-deoxyribonucleoside 5'-triphosphate = DNA(n+1) + diphosphate. Its function is as follows. Replicates viral genomic DNA in the late phase of lytic infection, producing long concatemeric DNA. The replication complex is composed of six viral proteins: the DNA polymerase, processivity factor, primase, primase-associated factor, helicase, and ssDNA-binding protein. This chain is DNA polymerase catalytic subunit, found in Homo sapiens (Human).